The primary structure comprises 348 residues: Phosphate acyltransferase (348 aa).

This sequence belongs to the PlsX family. Homodimer. Probably interacts with PlsY.

Its subcellular location is the cytoplasm. It catalyses the reaction a fatty acyl-[ACP] + phosphate = an acyl phosphate + holo-[ACP]. It functions in the pathway lipid metabolism; phospholipid metabolism. Catalyzes the reversible formation of acyl-phosphate (acyl-PO(4)) from acyl-[acyl-carrier-protein] (acyl-ACP). This enzyme utilizes acyl-ACP as fatty acyl donor, but not acyl-CoA. The chain is Phosphate acyltransferase from Francisella tularensis subsp. novicida (strain U112).